Consider the following 484-residue polypeptide: Pheophytinase, chloroplastic (484 aa).

The transit peptide at 1–47 (MEIISLNVVPQCSVVTWSSKLATKRLVPNRSSLLFSGVKKSRLVIRS) directs the protein to the chloroplast.

Belongs to the AB hydrolase superfamily. In terms of assembly, interacts with HCAR, RCCR, PAO and the LHCII complex. Part of a SGR1-CCE-LHCII complex, which acts in chlorophyll breakdown.

The protein resides in the plastid. Its subcellular location is the chloroplast thylakoid membrane. It is found in the chloroplast stroma. In terms of biological role, alpha/beta hydrolase dephytylating specifically the Mg-free chlorophyll pigment (pheophytin), yielding pheophorbide. No activity on chlorophyll. Belongs to the chlorophyll catabolic enzymes (CCEs). This chain is Pheophytinase, chloroplastic (PPH), found in Arabidopsis thaliana (Mouse-ear cress).